The sequence spans 387 residues: 3-ketoacyl-CoA thiolase (387 aa).

The active-site Acyl-thioester intermediate is Cys-91. Active-site proton acceptor residues include His-343 and Cys-373.

It belongs to the thiolase-like superfamily. Thiolase family. Heterotetramer of two alpha chains (FadB) and two beta chains (FadA).

It is found in the cytoplasm. It carries out the reaction an acyl-CoA + acetyl-CoA = a 3-oxoacyl-CoA + CoA. Its pathway is lipid metabolism; fatty acid beta-oxidation. In terms of biological role, catalyzes the final step of fatty acid oxidation in which acetyl-CoA is released and the CoA ester of a fatty acid two carbons shorter is formed. The polypeptide is 3-ketoacyl-CoA thiolase (Aliivibrio salmonicida (strain LFI1238) (Vibrio salmonicida (strain LFI1238))).